The primary structure comprises 430 residues: Rosmarinate synthase (430 aa).

Residue H152 is the Proton acceptor of the active site. Residues 178–210 (TPLPHFDRSSLSARNPPQPQFSHAEYQPPPTLE) are disordered. Residue D377 is the Proton acceptor of the active site.

It belongs to the plant acyltransferase family.

The enzyme catalyses (2R)-3-(3,4-dihydroxyphenyl)lactate + (E)-caffeoyl-CoA = (R)-rosmarinate + CoA. In terms of biological role, involved in the biosynthesis of rosmarinic acid, a compound with antiviral, antimicrobial and anti-inflammatory activities. Can use 4-coumaroyl- and caffeoyl-CoA as hydroxycinnamoyl donors and 4-Hydroxyphenyllactate and 3.4-Dihydroxyphenyllactate, but not shikimate or quinate, as hydroxycinnamoyl acceptors. Can also putatively catalyze amide formation with D-amino acids as acceptors. The sequence is that of Rosmarinate synthase (RAS) from Plectranthus scutellarioides (Coleus).